We begin with the raw amino-acid sequence, 431 residues long: Na(+)-translocating NADH-quinone reductase subunit F (431 aa).

The helical transmembrane segment at 10–30 threads the bilayer; sequence ISIASLVFCVIGLILSGIILI. Residues 41–133 form the 2Fe-2S ferredoxin-type domain; the sequence is CKLKINDDDS…DMCLEIEERY (93 aa). C76, C82, C85, and C117 together coordinate [2Fe-2S] cluster. One can recognise an FAD-binding FR-type domain in the interval 136–286; the sequence is ASSWEGTVVS…SGPYGESFMK (151 aa).

It belongs to the NqrF family. As to quaternary structure, composed of six subunits; NqrA, NqrB, NqrC, NqrD, NqrE and NqrF. The cofactor is [2Fe-2S] cluster. It depends on FAD as a cofactor.

It is found in the cell inner membrane. It carries out the reaction a ubiquinone + n Na(+)(in) + NADH + H(+) = a ubiquinol + n Na(+)(out) + NAD(+). Its function is as follows. NQR complex catalyzes the reduction of ubiquinone-1 to ubiquinol by two successive reactions, coupled with the transport of Na(+) ions from the cytoplasm to the periplasm. The first step is catalyzed by NqrF, which accepts electrons from NADH and reduces ubiquinone-1 to ubisemiquinone by a one-electron transfer pathway. This chain is Na(+)-translocating NADH-quinone reductase subunit F, found in Chlamydia caviae (strain ATCC VR-813 / DSM 19441 / 03DC25 / GPIC) (Chlamydophila caviae).